The primary structure comprises 169 residues: Shikimate kinase (169 aa).

13–18 (GAGKST) contributes to the ATP binding site. S17 contacts Mg(2+). Positions 35, 59, and 80 each coordinate substrate. R117 is an ATP binding site. Residue R136 participates in substrate binding. R153 serves as a coordination point for ATP.

Belongs to the shikimate kinase family. As to quaternary structure, monomer. Mg(2+) serves as cofactor.

The protein resides in the cytoplasm. It catalyses the reaction shikimate + ATP = 3-phosphoshikimate + ADP + H(+). Its pathway is metabolic intermediate biosynthesis; chorismate biosynthesis; chorismate from D-erythrose 4-phosphate and phosphoenolpyruvate: step 5/7. In terms of biological role, catalyzes the specific phosphorylation of the 3-hydroxyl group of shikimic acid using ATP as a cosubstrate. The chain is Shikimate kinase from Corynebacterium efficiens (strain DSM 44549 / YS-314 / AJ 12310 / JCM 11189 / NBRC 100395).